Consider the following 500-residue polypeptide: L-aspartate semialdehyde sulfurtransferase (500 aa).

The active-site Cysteine persulfide intermediate is cysteine 131. 2 CBS domains span residues 384–441 (MADF…IFDS) and 446–500 (MTKK…ARRY).

The protein belongs to the L-aspartate semialdehyde sulfurtransferase family. Forms homodimers. May form a complex with MA_1822.

The enzyme catalyses L-aspartate 4-semialdehyde + reduced 2[4Fe-4S]-[ferredoxin] + hydrogen sulfide + 3 H(+) = oxidized 2[4Fe-4S]-[ferredoxin] + L-homocysteine + H2O. Its pathway is amino-acid biosynthesis. In terms of biological role, required for O-acetylhomoserine sulfhydrylase (OAHS)-independent homocysteine (Hcy) biosynthesis. Together with MA_1822, catalyzes the condensation of sulfide with aspartate semialdehyde to generate homocysteine. Likely functions through persulfide intermediate. The chain is L-aspartate semialdehyde sulfurtransferase from Methanosarcina acetivorans (strain ATCC 35395 / DSM 2834 / JCM 12185 / C2A).